Here is a 367-residue protein sequence, read N- to C-terminus: Small ribosomal subunit protein uS2 (367 aa).

Residues 1–68 (MPKKAEAKTG…NSTPSTGSKF (68 aa)) form a disordered region. Residues 21-40 (AKKDVKAEVNETNKTAEKVS) show a composition bias toward basic and acidic residues. Over residues 53-66 (TNESSSNSTPSTGS) the composition is skewed to low complexity.

This sequence belongs to the universal ribosomal protein uS2 family.

This Malacoplasma penetrans (strain HF-2) (Mycoplasma penetrans) protein is Small ribosomal subunit protein uS2.